Consider the following 249-residue polypeptide: 5'-nucleotidase SurE (249 aa).

A divalent metal cation-binding residues include Asp-9, Asp-10, Ser-40, and Asn-92.

The protein belongs to the SurE nucleotidase family. A divalent metal cation is required as a cofactor.

It is found in the cytoplasm. The enzyme catalyses a ribonucleoside 5'-phosphate + H2O = a ribonucleoside + phosphate. Nucleotidase that shows phosphatase activity on nucleoside 5'-monophosphates. This chain is 5'-nucleotidase SurE, found in Shewanella sp. (strain ANA-3).